The following is a 225-amino-acid chain: ATP-dependent dethiobiotin synthetase BioD (225 aa).

12–17 (EVGKTY) provides a ligand contact to ATP. Residue threonine 16 coordinates Mg(2+). Lysine 37 is an active-site residue. Serine 41 is a binding site for substrate. ATP-binding positions include aspartate 52, 114–117 (EGAG), and 174–175 (NC). 2 residues coordinate Mg(2+): aspartate 52 and glutamate 114.

The protein belongs to the dethiobiotin synthetase family. Homodimer. The cofactor is Mg(2+).

It localises to the cytoplasm. It catalyses the reaction (7R,8S)-7,8-diammoniononanoate + CO2 + ATP = (4R,5S)-dethiobiotin + ADP + phosphate + 3 H(+). The protein operates within cofactor biosynthesis; biotin biosynthesis; biotin from 7,8-diaminononanoate: step 1/2. Functionally, catalyzes a mechanistically unusual reaction, the ATP-dependent insertion of CO2 between the N7 and N8 nitrogen atoms of 7,8-diaminopelargonic acid (DAPA, also called 7,8-diammoniononanoate) to form a ureido ring. This Francisella tularensis subsp. mediasiatica (strain FSC147) protein is ATP-dependent dethiobiotin synthetase BioD.